The sequence spans 375 residues: F-box/kelch-repeat protein At4g39580 (375 aa).

Positions 20–66 (PTTNLFLPDDILLSSLSRISRLYYPTFSLVSKSFRSLIASPELYQTR) constitute an F-box domain. 3 Kelch repeats span residues 132-178 (NIYA…VLDG), 179-225 (KIYV…KSVG), and 229-269 (KYHL…VINN).

The sequence is that of F-box/kelch-repeat protein At4g39580 from Arabidopsis thaliana (Mouse-ear cress).